The following is a 228-amino-acid chain: Translin (228 aa).

A DNA/RNA binding region spans residues 86 to 90 (RFHEH). The segment at 177-198 (LDSGFRLLNLKNDSLRKRYDGL) is leucine-zipper. Lys187 bears the N6-acetyllysine mark. Residue Ser190 is modified to Phosphoserine. Lys199 carries the post-translational modification N6-acetyllysine.

It belongs to the translin family. As to quaternary structure, ring-shaped heterooctamer of six TSN and two TSNAX subunits, DNA/RNA binding occurs inside the ring.

It is found in the cytoplasm. The protein localises to the nucleus. In terms of biological role, DNA-binding protein that specifically recognizes consensus sequences at the breakpoint junctions in chromosomal translocations, mostly involving immunoglobulin (Ig)/T-cell receptor gene segments. Seems to recognize single-stranded DNA ends generated by staggered breaks occurring at recombination hot spots. Functionally, exhibits both single-stranded and double-stranded endoribonuclease activity. May act as an activator of RNA-induced silencing complex (RISC) by facilitating endonucleolytic cleavage of the siRNA passenger strand. The protein is Translin (Tsn) of Mus musculus (Mouse).